The sequence spans 249 residues: Probable hydroxyacylglutathione hydrolase ECU02_0580 (249 aa).

Positions 75, 77, 79, 80, 126, 144, and 183 each coordinate Zn(2+). Residues 183-185 (HDY) and 240-243 (RERK) each bind substrate.

It belongs to the metallo-beta-lactamase superfamily. Glyoxalase II family. It depends on Zn(2+) as a cofactor.

The protein localises to the cytoplasm. Its subcellular location is the nucleus. It carries out the reaction an S-(2-hydroxyacyl)glutathione + H2O = a 2-hydroxy carboxylate + glutathione + H(+). The protein operates within secondary metabolite metabolism; methylglyoxal degradation; (R)-lactate from methylglyoxal: step 2/2. Functionally, thiolesterase that catalyzes the hydrolysis of S-D-lactoyl-glutathione to form glutathione and D-lactic acid. This is Probable hydroxyacylglutathione hydrolase ECU02_0580 from Encephalitozoon cuniculi (strain GB-M1) (Microsporidian parasite).